We begin with the raw amino-acid sequence, 860 residues long: Beta-glucosidase 1 (860 aa).

A signal peptide spans 1 to 19; sequence MKLSWLEAAALTAASVVSA. 3 N-linked (GlcNAc...) asparagine glycosylation sites follow: Asn-61, Asn-211, and Asn-252. Asp-280 is an active-site residue. Asn-315, Asn-322, Asn-354, Asn-387, Asn-442, Asn-523, Asn-542, Asn-564, Asn-658, Asn-668, Asn-690, and Asn-712 each carry an N-linked (GlcNAc...) asparagine glycan.

Belongs to the glycosyl hydrolase 3 family.

It carries out the reaction Hydrolysis of terminal, non-reducing beta-D-glucosyl residues with release of beta-D-glucose.. It participates in glycan metabolism; cellulose degradation. The polypeptide is Beta-glucosidase 1 (Aspergillus aculeatus).